Consider the following 1391-residue polypeptide: Leucine-rich PPR motif-containing protein, mitochondrial (1391 aa).

The transit peptide at 1-42 directs the protein to the mitochondrion; it reads MSALLAGARFLLRPGLRALPAPCVRLSPGQGRYLNNTPGHFA. PPR repeat units lie at residues 110-144, 145-179, 180-214, 215-249, 250-284, 389-425, 704-738, 741-775, 779-813, 815-850, 948-982, 1028-1062, 1063-1093, 1100-1134, and 1310-1344; these read LLRS…GAVF, DVSH…NVQP, NRVT…DLPI, TEAV…GIEP, GPET…EGSL, NLHS…GMPV, AIGT…DSSA, DTSK…DVPL, TTTS…GLAK, TSNL…NCMP, RDDM…NVIP, PESS…GTAM, SASA…AENH, NDAA…DKVP, and RETA…SVSP. Residues 1118–1387 are RNA-binding; that stretch reads KDALASLKAM…KLKKDKADSY (270 aa).

Its subcellular location is the mitochondrion. The protein resides in the nucleus. Its function is as follows. May play a role in RNA metabolism in both nuclei and mitochondria. May bind mature mRNA in the nucleus outer membrane. In mitochondria binds to poly(A) mRNA. May be involved in transcription regulation. Binds single-stranded DNA. The sequence is that of Leucine-rich PPR motif-containing protein, mitochondrial (lrpprc) from Xenopus tropicalis (Western clawed frog).